The primary structure comprises 104 residues: NADH-quinone oxidoreductase subunit K (104 aa).

3 consecutive transmembrane segments (helical) span residues 7–27 (PDMA…GVLV), 31–51 (LLFM…AFVA), and 63–83 (VMFL…LAIL).

It belongs to the complex I subunit 4L family. NDH-1 is composed of 14 different subunits. Subunits NuoA, H, J, K, L, M, N constitute the membrane sector of the complex.

Its subcellular location is the cell inner membrane. It carries out the reaction a quinone + NADH + 5 H(+)(in) = a quinol + NAD(+) + 4 H(+)(out). Functionally, NDH-1 shuttles electrons from NADH, via FMN and iron-sulfur (Fe-S) centers, to quinones in the respiratory chain. The immediate electron acceptor for the enzyme in this species is believed to be ubiquinone. Couples the redox reaction to proton translocation (for every two electrons transferred, four hydrogen ions are translocated across the cytoplasmic membrane), and thus conserves the redox energy in a proton gradient. This Gluconacetobacter diazotrophicus (strain ATCC 49037 / DSM 5601 / CCUG 37298 / CIP 103539 / LMG 7603 / PAl5) protein is NADH-quinone oxidoreductase subunit K.